Reading from the N-terminus, the 151-residue chain is Large ribosomal subunit protein bL9 (151 aa).

Belongs to the bacterial ribosomal protein bL9 family.

Binds to the 23S rRNA. In Chlorobium limicola (strain DSM 245 / NBRC 103803 / 6330), this protein is Large ribosomal subunit protein bL9.